The primary structure comprises 849 residues: DNA mismatch repair protein MutS (849 aa).

602-609 contacts ATP; the sequence is GPNMSGKS.

Belongs to the DNA mismatch repair MutS family.

Functionally, this protein is involved in the repair of mismatches in DNA. It is possible that it carries out the mismatch recognition step. This protein has a weak ATPase activity. This chain is DNA mismatch repair protein MutS, found in Streptococcus sanguinis (strain SK36).